Reading from the N-terminus, the 1013-residue chain is Dichlorochromopyrrolate synthase (1013 aa).

The protein belongs to the RebD family. Homodimer. Heme serves as cofactor.

It carries out the reaction 2 3-(7-chloroindol-3-yl)-2-iminopropanoate + H2O2 = dichlorochromopyrrolate + NH4(+) + 2 H2O + H(+). It catalyses the reaction 2 2-iminio-3-(indol-3-yl)propanoate + H2O2 = chromopyrrolate + NH4(+) + 2 H2O + H(+). The enzyme catalyses 2 H2O2 = O2 + 2 H2O. Functionally, involved in the biosynthesis of the indolocarbazole antitumor agent rebeccamycin. Catalyzes the hydrogen peroxide-dependent dimerization of two L-tryptophan-derived molecules (imine form of indole 3-pyruvate (IPA)), to form dichlorochromopyrrolic acid (CPA), the precursor for the six-ring bisindolopyrrolocarbazole scaffold of the rebeccamycin. The hydrogen peroxide is provided together with iminoindolpropanoate by RebO. Due to the instability of indole 3-pyruvate (IPA), which is hydrolyzed in solution and exits in equilibrium with the predominant ketone form of IPA, the concerted functioning of the RebO/RebD system appears to prevent the buildup of significant amounts of IPA and its imine in solution, effectively shepherding the imine further down the biosynthetic chain. The protein is Dichlorochromopyrrolate synthase (rebD) of Lentzea aerocolonigenes (Lechevalieria aerocolonigenes).